The following is a 229-amino-acid chain: Heptaprenylglyceryl phosphate synthase (229 aa).

Lys12 contacts sn-glycerol 1-phosphate. Residues Asp14 and Ser40 each contribute to the Mg(2+) site. Sn-glycerol 1-phosphate contacts are provided by residues 159-164, Gly189, and 209-210; these read YLEYSG and GN.

This sequence belongs to the GGGP/HepGP synthase family. Group I subfamily. In terms of assembly, homodimer. Mg(2+) serves as cofactor.

The enzyme catalyses sn-glycerol 1-phosphate + all-trans-heptaprenyl diphosphate = 3-heptaprenyl-sn-glycero-1-phosphate + diphosphate. Its pathway is membrane lipid metabolism; glycerophospholipid metabolism. Prenyltransferase that catalyzes in vivo the transfer of the heptaprenyl moiety of heptaprenyl pyrophosphate (HepPP; 35 carbon atoms) to the C3 hydroxyl of sn-glycerol-1-phosphate (G1P), producing heptaprenylglyceryl phosphate (HepGP). This reaction is an ether-bond-formation step in the biosynthesis of archaea-type G1P-based membrane lipids found in Bacillales. This chain is Heptaprenylglyceryl phosphate synthase, found in Bacillus cereus (strain ATCC 14579 / DSM 31 / CCUG 7414 / JCM 2152 / NBRC 15305 / NCIMB 9373 / NCTC 2599 / NRRL B-3711).